The primary structure comprises 393 residues: Isocitrate dehydrogenase [NAD] subunit gamma 1, mitochondrial (393 aa).

A mitochondrion-targeting transit peptide spans 1 to 39 (MALKVAIAAGSAAKAIFKPALLCRPWEVLAAHEAPRRSI). Thr120 serves as a coordination point for citrate. Ser130 carries the phosphoserine modification. Asn133 is a citrate binding site. Substrate is bound by residues Arg136 and Arg167. Lys206 carries the post-translational modification N6-acetyllysine. N6-succinyllysine is present on Lys226. Asp254 is a substrate binding site. Asp254 serves as a coordination point for Mn(2+). Residues Asn312, Thr313, and Asn324 each contribute to the ADP site.

It belongs to the isocitrate and isopropylmalate dehydrogenases family. Heterooligomer of subunits alpha (IDH3A), beta (IDH3B), and gamma (IDH3G) in the apparent ratio of 2:1:1. The heterodimer containing one IDH3A and one IDH3B subunit and the heterodimer containing one IDH3A and one IDH3G subunit assemble into a heterotetramer (which contains two subunits of IDH3A, one of IDH3B and one of IDH3G) and further into the heterooctamer. Mg(2+) serves as cofactor. Requires Mn(2+) as cofactor.

It is found in the mitochondrion. With respect to regulation, the heterotetramer and the heterodimer composed of IDH3A and IDH3G subunits can be allosterically activated by citrate (CIT) or/and ADP, and the two activators can act independently or synergistically. The heterodimer composed of IDH3A and IDH3B subunits cannot be allosterically regulated and the allosteric regulation of the heterotetramer is through the IDH3G subunit and not the IDH3B subunit. The IDH3G subunit contains the allosteric site which consists of a CIT-binding site and an ADP-binding site, and the binding of CIT and ADP causes conformational changes at the allosteric site which are transmitted to the active site in the catalytic subunit (IDH3A) through a cascade of conformational changes at the heterodimer interface, leading to stabilization of the isocitrate-binding at the active site and thus activation of the enzyme. ATP can activate the heterotetramer and the heterodimer composed of IDH3A and IDH3G subunits at low concentrations but inhibits their activities at high concentrations, whereas ATP exhibits only inhibitory effect on the heterodimer composed of IDH3A and IDH3B subunits. Its function is as follows. Regulatory subunit which plays a role in the allosteric regulation of the enzyme catalyzing the decarboxylation of isocitrate (ICT) into alpha-ketoglutarate. The heterodimer composed of the alpha (IDH3A) and beta (IDH3B) subunits and the heterodimer composed of the alpha (IDH3A) and gamma (IDH3G) subunits, have considerable basal activity but the full activity of the heterotetramer (containing two subunits of IDH3A, one of IDH3B and one of IDH3G) requires the assembly and cooperative function of both heterodimers. The polypeptide is Isocitrate dehydrogenase [NAD] subunit gamma 1, mitochondrial (Idh3g) (Rattus norvegicus (Rat)).